The chain runs to 307 residues: Ribonuclease Z (307 aa).

Zn(2+)-binding residues include histidine 63, histidine 65, aspartate 67, histidine 68, histidine 141, aspartate 212, and histidine 270. Aspartate 67 functions as the Proton acceptor in the catalytic mechanism.

It belongs to the RNase Z family. As to quaternary structure, homodimer. The cofactor is Zn(2+).

The catalysed reaction is Endonucleolytic cleavage of RNA, removing extra 3' nucleotides from tRNA precursor, generating 3' termini of tRNAs. A 3'-hydroxy group is left at the tRNA terminus and a 5'-phosphoryl group is left at the trailer molecule.. Its function is as follows. Zinc phosphodiesterase, which displays some tRNA 3'-processing endonuclease activity. Probably involved in tRNA maturation, by removing a 3'-trailer from precursor tRNA. The protein is Ribonuclease Z of Bacillus cereus (strain ZK / E33L).